The sequence spans 85 residues: UPF0291 protein str0508 (85 aa).

The interval 62-85 is disordered; the sequence is TPEKLRQVQREKGLHGRSLDDPES.

The protein belongs to the UPF0291 family.

The protein localises to the cytoplasm. The protein is UPF0291 protein str0508 of Streptococcus thermophilus (strain CNRZ 1066).